Here is a 1426-residue protein sequence, read N- to C-terminus: ABC transporter G family member 31 (1426 aa).

Residues Asn-6 and Asn-150 are each glycosylated (N-linked (GlcNAc...) asparagine). Residues 160-434 (LSSLRIIKPR…FESLGFRLPP (275 aa)) enclose the ABC transporter 1 domain. An ATP-binding site is contributed by 193 to 200 (GPPGSGKS). Asn-219 is a glycosylation site (N-linked (GlcNAc...) asparagine). Thr-276 is modified (phosphothreonine). The ABC transmembrane type-2 1 domain occupies 512–725 (ENLKVCFVRE…GQRAIAVNEF (214 aa)). The next 6 membrane-spanning stretches (helical) occupy residues 530 to 550 (FLYT…ATVF), 569 to 589 (CLFF…PLMI), 618 to 638 (VPYS…TVGL), 649 to 669 (MLLL…MASL), 675 to 695 (IANT…GFVI), and 760 to 780 (IGIA…TLAL). The 253-residue stretch at 826–1078 (MTFHNVNYYV…VLVDYFQGIN (253 aa)) folds into the ABC transporter 2 domain. Asn-856 is a glycosylation site (N-linked (GlcNAc...) asparagine). 871–878 (GSSGAGKT) serves as a coordination point for ATP. One can recognise an ABC transmembrane type-2 2 domain in the interval 1151–1365 (SQFLLCLWKQ…TLQGVILSQL (215 aa)). Transmembrane regions (helical) follow at residues 1172–1192 (LVRL…FWDI), 1202–1222 (LITV…SNAS), 1258–1278 (IPYI…TIGF), 1285–1305 (FVLY…YGMM), 1315–1335 (LAAV…GFLV), 1342–1362 (VWWI…GVIL), and 1396–1416 (IGVS…AFAL).

This sequence belongs to the ABC transporter superfamily. ABCG family. PDR (TC 3.A.1.205) subfamily. Expressed in seedlings, stems, leaves, siliques and inflorescence. In seeds, confined to the endosperm. Highly expressed in the tapetum of anthers.

Its subcellular location is the cell membrane. The catalysed reaction is abscisate(in) + ATP + H2O = abscisate(out) + ADP + phosphate + H(+). Together with ABCG25, export abscisic acid (ABA) from the endosperm to deliver it to the embryo via ABCG30 and ABCG40-mediated import to suppress radicle extension and subsequent embryonic growth. Together with ABCG9, involved in pollen coat deposition of steryl glycosides required for pollen fitness. May be a general defense protein. The protein is ABC transporter G family member 31 of Arabidopsis thaliana (Mouse-ear cress).